The sequence spans 249 residues: ATP-dependent dethiobiotin synthetase BioD (249 aa).

Residue 11-16 coordinates ATP; the sequence is NVGKTI. Position 15 (Thr-15) interacts with Mg(2+). Residue Lys-31 is part of the active site. Substrate is bound at residue Thr-35. ATP is bound by residues Asp-40, 127–130, 188–189, and 215–217; these read EGAG, NS, and PYL. The Mg(2+) site is built by Asp-40 and Glu-127.

The protein belongs to the dethiobiotin synthetase family. As to quaternary structure, homodimer. Requires Mg(2+) as cofactor.

The protein localises to the cytoplasm. It catalyses the reaction (7R,8S)-7,8-diammoniononanoate + CO2 + ATP = (4R,5S)-dethiobiotin + ADP + phosphate + 3 H(+). It functions in the pathway cofactor biosynthesis; biotin biosynthesis; biotin from 7,8-diaminononanoate: step 1/2. Its function is as follows. Catalyzes a mechanistically unusual reaction, the ATP-dependent insertion of CO2 between the N7 and N8 nitrogen atoms of 7,8-diaminopelargonic acid (DAPA, also called 7,8-diammoniononanoate) to form a ureido ring. The polypeptide is ATP-dependent dethiobiotin synthetase BioD (Neorickettsia sennetsu (strain ATCC VR-367 / Miyayama) (Ehrlichia sennetsu)).